The chain runs to 66 residues: UPF0337 protein RPA4217 (66 aa).

The protein belongs to the UPF0337 (CsbD) family.

The protein is UPF0337 protein RPA4217 of Rhodopseudomonas palustris (strain ATCC BAA-98 / CGA009).